We begin with the raw amino-acid sequence, 270 residues long: Tryptophan synthase alpha chain (270 aa).

Active-site proton acceptor residues include Glu50 and Asp61.

It belongs to the TrpA family. In terms of assembly, tetramer of two alpha and two beta chains.

The enzyme catalyses (1S,2R)-1-C-(indol-3-yl)glycerol 3-phosphate + L-serine = D-glyceraldehyde 3-phosphate + L-tryptophan + H2O. It participates in amino-acid biosynthesis; L-tryptophan biosynthesis; L-tryptophan from chorismate: step 5/5. Its function is as follows. The alpha subunit is responsible for the aldol cleavage of indoleglycerol phosphate to indole and glyceraldehyde 3-phosphate. The sequence is that of Tryptophan synthase alpha chain from Chlorobium luteolum (strain DSM 273 / BCRC 81028 / 2530) (Pelodictyon luteolum).